Consider the following 198-residue polypeptide: CASP-like protein 2B1 (198 aa).

The Cytoplasmic portion of the chain corresponds to 1–12; sequence MAAAMGLERKAK. Residues 13–33 traverse the membrane as a helical segment; that stretch reads VAEVALRCAVCALAALAAALV. Residues 34–55 lie on the Extracellular side of the membrane; the sequence is GTGSQTRTFFSLEKKARFTDMK. Residues 56–76 traverse the membrane as a helical segment; the sequence is ALVLLVAAHGAAAVYSLLQLA. Residues 77 to 91 are Cytoplasmic-facing; the sequence is RCAAAAAWKGGSNGG. Residues 92–112 form a helical membrane-spanning segment; sequence AAVVAWSVFSCDQAVAYALMA. Residues 113-149 lie on the Extracellular side of the membrane; sequence ATAAALQSSVVGKRGQPELQWMPVCGLYGAFCRRVGE. A helical transmembrane segment spans residues 150–170; sequence GLAAAVAAGLAAVLLAAVSAF. Topologically, residues 171–198 are cytoplasmic; it reads NLFRLYGGGGGGRKSSAGAVSGNGANTW.

This sequence belongs to the Casparian strip membrane proteins (CASP) family. As to quaternary structure, homodimer and heterodimers.

Its subcellular location is the cell membrane. This is CASP-like protein 2B1 from Oryza sativa subsp. japonica (Rice).